Consider the following 267-residue polypeptide: MYKFAVFGNPIKHSLSPNIHIQFAQQTGFEVSYDKILAPIDDFSSSAQAFINQGANGFNITVPFKLDAFKFASELTLNAQIAGAVNTIKIEQDKIIGENTDGIGLVNDLTHNLGIELKDKVILILGAGGATQGILLPLLKQQPNHVMIANRTPFKAIKLAKDFAKFGKTCGFDLDKIKHDPVNIIINATSTSLYGKMPDIASGVANNAICYDLMYGKQTPFMDWATINHGSMISDGLGMLIEQAAVAFEFWTGVKPNTEQVLSNLRS.

Shikimate is bound by residues Ser-14–Ser-16 and Thr-61. Residue Lys-65 is the Proton acceptor of the active site. Residues Asn-86 and Asp-101 each contribute to the shikimate site. NADP(+) is bound by residues Gly-126–Ala-130, Asn-150–Lys-155, and Leu-213. Tyr-215 contacts shikimate. Gly-236 contacts NADP(+).

It belongs to the shikimate dehydrogenase family. As to quaternary structure, homodimer.

It catalyses the reaction shikimate + NADP(+) = 3-dehydroshikimate + NADPH + H(+). It functions in the pathway metabolic intermediate biosynthesis; chorismate biosynthesis; chorismate from D-erythrose 4-phosphate and phosphoenolpyruvate: step 4/7. Involved in the biosynthesis of the chorismate, which leads to the biosynthesis of aromatic amino acids. Catalyzes the reversible NADPH linked reduction of 3-dehydroshikimate (DHSA) to yield shikimate (SA). The polypeptide is Shikimate dehydrogenase (NADP(+)) (Ruthia magnifica subsp. Calyptogena magnifica).